The chain runs to 339 residues: Glycerol-3-phosphate dehydrogenase [NAD(P)+] (339 aa).

NADPH-binding residues include Ser-15, Tyr-16, His-36, and Lys-110. Residues Lys-110, Gly-139, and Thr-141 each coordinate sn-glycerol 3-phosphate. Position 143 (Ala-143) interacts with NADPH. 5 residues coordinate sn-glycerol 3-phosphate: Lys-195, Asp-248, Ser-258, Arg-259, and Asn-260. Catalysis depends on Lys-195, which acts as the Proton acceptor. Arg-259 contributes to the NADPH binding site. Positions 283 and 285 each coordinate NADPH.

This sequence belongs to the NAD-dependent glycerol-3-phosphate dehydrogenase family.

Its subcellular location is the cytoplasm. It carries out the reaction sn-glycerol 3-phosphate + NAD(+) = dihydroxyacetone phosphate + NADH + H(+). The catalysed reaction is sn-glycerol 3-phosphate + NADP(+) = dihydroxyacetone phosphate + NADPH + H(+). The protein operates within membrane lipid metabolism; glycerophospholipid metabolism. Functionally, catalyzes the reduction of the glycolytic intermediate dihydroxyacetone phosphate (DHAP) to sn-glycerol 3-phosphate (G3P), the key precursor for phospholipid synthesis. This is Glycerol-3-phosphate dehydrogenase [NAD(P)+] from Yersinia pseudotuberculosis serotype O:1b (strain IP 31758).